Reading from the N-terminus, the 132-residue chain is Small ribosomal subunit protein uS8 (132 aa).

Belongs to the universal ribosomal protein uS8 family. In terms of assembly, part of the 30S ribosomal subunit. Contacts proteins S5 and S12.

One of the primary rRNA binding proteins, it binds directly to 16S rRNA central domain where it helps coordinate assembly of the platform of the 30S subunit. This is Small ribosomal subunit protein uS8 from Rickettsia bellii (strain OSU 85-389).